We begin with the raw amino-acid sequence, 404 residues long: Glycerol-1-phosphate dehydrogenase [NAD(P)+] (404 aa).

NAD(+)-binding positions include Asp-56, 118 to 122 (GTIHD), and 140 to 143 (TAPS). Asp-145 is a substrate binding site. Residue Ser-149 participates in NAD(+) binding. Asp-192 contacts substrate. Ni(2+)-binding residues include Asp-192 and His-272. Substrate is bound at residue His-276. Position 292 (His-292) interacts with Ni(2+).

Belongs to the glycerol-1-phosphate dehydrogenase family. In terms of assembly, homodimer. Requires Ni(2+) as cofactor.

It localises to the cytoplasm. The enzyme catalyses sn-glycerol 1-phosphate + NAD(+) = dihydroxyacetone phosphate + NADH + H(+). The catalysed reaction is sn-glycerol 1-phosphate + NADP(+) = dihydroxyacetone phosphate + NADPH + H(+). Catalyzes the NAD(P)H-dependent reduction of dihydroxyacetonephosphate (DHAP or glycerone phosphate) to glycerol 1-phosphate (G1P). The G1P thus generated is probably used for the synthesis of phosphoglycerolipids in Gram-positive bacterial species. The chain is Glycerol-1-phosphate dehydrogenase [NAD(P)+] from Geobacillus stearothermophilus (Bacillus stearothermophilus).